The primary structure comprises 475 residues: Ribulose bisphosphate carboxylase large chain (475 aa).

The propeptide occupies 1-2 (MS). Pro-3 is modified (N-acetylproline). The residue at position 14 (Lys-14) is an N6,N6,N6-trimethyllysine. Residues Asn-123 and Thr-173 each contribute to the substrate site. Lys-175 (proton acceptor) is an active-site residue. Position 177 (Lys-177) interacts with substrate. 3 residues coordinate Mg(2+): Lys-201, Asp-203, and Glu-204. Lys-201 is subject to N6-carboxylysine. His-294 acts as the Proton acceptor in catalysis. Residues Arg-295, His-327, and Ser-379 each contribute to the substrate site.

Belongs to the RuBisCO large chain family. Type I subfamily. Heterohexadecamer of 8 large chains and 8 small chains; disulfide-linked. The disulfide link is formed within the large subunit homodimers. It depends on Mg(2+) as a cofactor. In terms of processing, the disulfide bond which can form in the large chain dimeric partners within the hexadecamer appears to be associated with oxidative stress and protein turnover.

It localises to the plastid. It is found in the chloroplast. It carries out the reaction 2 (2R)-3-phosphoglycerate + 2 H(+) = D-ribulose 1,5-bisphosphate + CO2 + H2O. The enzyme catalyses D-ribulose 1,5-bisphosphate + O2 = 2-phosphoglycolate + (2R)-3-phosphoglycerate + 2 H(+). Its function is as follows. RuBisCO catalyzes two reactions: the carboxylation of D-ribulose 1,5-bisphosphate, the primary event in carbon dioxide fixation, as well as the oxidative fragmentation of the pentose substrate in the photorespiration process. Both reactions occur simultaneously and in competition at the same active site. The chain is Ribulose bisphosphate carboxylase large chain (rbcL) from Marchantia polymorpha (Common liverwort).